We begin with the raw amino-acid sequence, 209 residues long: MKPQSLEANIINPITPLEVTQELSDNVILTALDDLYDWVKMSSLYPFMFGTACCFMEFMGAYASRFDMERFGMIPRATPRQADLLITAGTITMKYAPALVRLYEQMPEPKYVMAMGACTITGGMFSADSPSAVRGVDKLIPVDVYIPGCPPRAEAVLDAITKLRKKIANESLQERDTTQQTHRYYSIPHKMKVVPPAVTGQYLQSHEVA.

Positions 53, 54, 118, and 149 each coordinate [4Fe-4S] cluster.

The protein belongs to the complex I 20 kDa subunit family. As to quaternary structure, NDH-1 can be composed of about 15 different subunits; different subcomplexes with different compositions have been identified which probably have different functions. [4Fe-4S] cluster serves as cofactor.

Its subcellular location is the cellular thylakoid membrane. It catalyses the reaction a plastoquinone + NADH + (n+1) H(+)(in) = a plastoquinol + NAD(+) + n H(+)(out). The enzyme catalyses a plastoquinone + NADPH + (n+1) H(+)(in) = a plastoquinol + NADP(+) + n H(+)(out). In terms of biological role, NDH-1 shuttles electrons from an unknown electron donor, via FMN and iron-sulfur (Fe-S) centers, to quinones in the respiratory and/or the photosynthetic chain. The immediate electron acceptor for the enzyme in this species is believed to be plastoquinone. Couples the redox reaction to proton translocation, and thus conserves the redox energy in a proton gradient. Cyanobacterial NDH-1 also plays a role in inorganic carbon-concentration. This is NAD(P)H-quinone oxidoreductase subunit K 2 from Acaryochloris marina (strain MBIC 11017).